Here is a 660-residue protein sequence, read N- to C-terminus: Bifunctional polymyxin resistance protein ArnA (660 aa).

Residues 1–304 (MKAIVFAYHD…EMGIVTDVRV (304 aa)) form a formyltransferase ArnAFT region. His-104 (proton donor; for formyltransferase activity) is an active-site residue. Residues Arg-114 and 136–140 (TAKAD) contribute to the (6R)-10-formyltetrahydrofolate site. The interval 314 to 660 (RRQRVLILGV…RGAVEELGNK (347 aa)) is dehydrogenase ArnADH. NAD(+)-binding positions include Asp-347 and 368–369 (DV). Residues Ala-393, Tyr-398, and 432-433 (TS) contribute to the UDP-alpha-D-glucuronate site. Residue Glu-434 is the Proton acceptor; for decarboxylase activity of the active site. UDP-alpha-D-glucuronate-binding positions include Arg-460, Asn-492, 526-535 (KLVDGGEQKR), and Tyr-613. Arg-619 functions as the Proton donor; for decarboxylase activity in the catalytic mechanism.

It in the N-terminal section; belongs to the Fmt family. UDP-L-Ara4N formyltransferase subfamily. In the C-terminal section; belongs to the NAD(P)-dependent epimerase/dehydratase family. UDP-glucuronic acid decarboxylase subfamily. Homohexamer, formed by a dimer of trimers.

The catalysed reaction is UDP-alpha-D-glucuronate + NAD(+) = UDP-beta-L-threo-pentopyranos-4-ulose + CO2 + NADH. It catalyses the reaction UDP-4-amino-4-deoxy-beta-L-arabinose + (6R)-10-formyltetrahydrofolate = UDP-4-deoxy-4-formamido-beta-L-arabinose + (6S)-5,6,7,8-tetrahydrofolate + H(+). The protein operates within nucleotide-sugar biosynthesis; UDP-4-deoxy-4-formamido-beta-L-arabinose biosynthesis; UDP-4-deoxy-4-formamido-beta-L-arabinose from UDP-alpha-D-glucuronate: step 1/3. It participates in nucleotide-sugar biosynthesis; UDP-4-deoxy-4-formamido-beta-L-arabinose biosynthesis; UDP-4-deoxy-4-formamido-beta-L-arabinose from UDP-alpha-D-glucuronate: step 3/3. Its pathway is bacterial outer membrane biogenesis; lipopolysaccharide biosynthesis. Bifunctional enzyme that catalyzes the oxidative decarboxylation of UDP-glucuronic acid (UDP-GlcUA) to UDP-4-keto-arabinose (UDP-Ara4O) and the addition of a formyl group to UDP-4-amino-4-deoxy-L-arabinose (UDP-L-Ara4N) to form UDP-L-4-formamido-arabinose (UDP-L-Ara4FN). The modified arabinose is attached to lipid A and is required for resistance to polymyxin and cationic antimicrobial peptides. The polypeptide is Bifunctional polymyxin resistance protein ArnA (Proteus mirabilis (strain HI4320)).